The primary structure comprises 60 residues: Rubredoxin 4 (60 aa).

Positions Y4–V55 constitute a Rubredoxin-like domain. Fe cation-binding residues include C9, C12, C42, and C45.

Belongs to the rubredoxin family. It depends on Fe(3+) as a cofactor.

Its function is as follows. Involved in the hydrocarbon hydroxylating system, which transfers electrons from NADH to rubredoxin reductase and then through rubredoxin to alkane 1 monooxygenase. The sequence is that of Rubredoxin 4 (rubA4) from Rhodococcus sp. (strain Q15).